The primary structure comprises 351 residues: Peptidyl-Lys metalloendopeptidase (351 aa).

An N-terminal signal peptide occupies residues 1–22 (MFSLSSRFFLYSLCLSAVAVSA). The propeptide occupies 23–183 (APGLSLSLSG…VARRSNLGKR (161 aa)). Cystine bridges form between C189–C259 and C261–C281. H301 is a binding site for Zn(2+). The active site involves E302. The Zn(2+) site is built by H305 and D314.

The protein belongs to the peptidase M35 family. Requires Zn(2+) as cofactor.

It is found in the secreted. It carries out the reaction Preferential cleavage in proteins: -Xaa-|-Lys- (in which Xaa may be Pro).. Inhibited by chelating agents such as imidazole, alpha,alpha'-bipyridine, and 1,10-phenanthroline. This Armillaria mellea (Honey mushroom) protein is Peptidyl-Lys metalloendopeptidase (MEP).